A 358-amino-acid polypeptide reads, in one-letter code: Probable D-xylulose reductase A (358 aa).

Residues Cys47, His72, and Glu73 each coordinate Zn(2+). 182-187 (GAGPVG) contributes to the NAD(+) binding site.

This sequence belongs to the zinc-containing alcohol dehydrogenase family. Zn(2+) is required as a cofactor.

The enzyme catalyses xylitol + NAD(+) = D-xylulose + NADH + H(+). The protein operates within carbohydrate degradation; L-arabinose degradation via L-arabinitol; D-xylulose 5-phosphate from L-arabinose (fungal route): step 4/5. Xylitol dehydrogenase which catalyzes the conversion of xylitol to D-xylulose. Xylose is a major component of hemicelluloses such as xylan. Most fungi utilize D-xylose via three enzymatic reactions, xylose reductase (XR), xylitol dehydrogenase (XDH), and xylulokinase, to form xylulose 5-phosphate, which enters pentose phosphate pathway. The protein is Probable D-xylulose reductase A (xdhA) of Aspergillus fumigatus (strain CBS 144.89 / FGSC A1163 / CEA10) (Neosartorya fumigata).